The chain runs to 365 residues: Histidinol-phosphate aminotransferase 2 (365 aa).

K222 is modified (N6-(pyridoxal phosphate)lysine).

This sequence belongs to the class-II pyridoxal-phosphate-dependent aminotransferase family. Histidinol-phosphate aminotransferase subfamily. As to quaternary structure, homodimer. Pyridoxal 5'-phosphate is required as a cofactor.

The catalysed reaction is L-histidinol phosphate + 2-oxoglutarate = 3-(imidazol-4-yl)-2-oxopropyl phosphate + L-glutamate. It functions in the pathway amino-acid biosynthesis; L-histidine biosynthesis; L-histidine from 5-phospho-alpha-D-ribose 1-diphosphate: step 7/9. The sequence is that of Histidinol-phosphate aminotransferase 2 (hisC2) from Bordetella parapertussis (strain 12822 / ATCC BAA-587 / NCTC 13253).